We begin with the raw amino-acid sequence, 312 residues long: Lipoyl synthase (312 aa).

[4Fe-4S] cluster contacts are provided by cysteine 51, cysteine 56, cysteine 62, cysteine 77, cysteine 81, cysteine 84, and serine 290. The Radical SAM core domain occupies tryptophan 63–phenylalanine 280.

It belongs to the radical SAM superfamily. Lipoyl synthase family. The cofactor is [4Fe-4S] cluster.

It is found in the cytoplasm. The enzyme catalyses [[Fe-S] cluster scaffold protein carrying a second [4Fe-4S](2+) cluster] + N(6)-octanoyl-L-lysyl-[protein] + 2 oxidized [2Fe-2S]-[ferredoxin] + 2 S-adenosyl-L-methionine + 4 H(+) = [[Fe-S] cluster scaffold protein] + N(6)-[(R)-dihydrolipoyl]-L-lysyl-[protein] + 4 Fe(3+) + 2 hydrogen sulfide + 2 5'-deoxyadenosine + 2 L-methionine + 2 reduced [2Fe-2S]-[ferredoxin]. It functions in the pathway protein modification; protein lipoylation via endogenous pathway; protein N(6)-(lipoyl)lysine from octanoyl-[acyl-carrier-protein]: step 2/2. Its function is as follows. Catalyzes the radical-mediated insertion of two sulfur atoms into the C-6 and C-8 positions of the octanoyl moiety bound to the lipoyl domains of lipoate-dependent enzymes, thereby converting the octanoylated domains into lipoylated derivatives. The sequence is that of Lipoyl synthase from Chlamydia caviae (strain ATCC VR-813 / DSM 19441 / 03DC25 / GPIC) (Chlamydophila caviae).